Here is a 33-residue protein sequence, read N- to C-terminus: Nigrocin-1 (33 aa).

C27 and C33 form a disulfide bridge.

The protein belongs to the frog skin active peptide (FSAP) family. Brevinin subfamily. Expressed by the skin dorsal glands.

The protein resides in the secreted. In terms of biological role, shows antibacterial activity against both Gram-positive and Gram-negative bacteria and against the fungus C.albicans. Has no hemolytic activity. The protein is Nigrocin-1 of Pelophylax nigromaculatus (Black-spotted frog).